Here is a 327-residue protein sequence, read N- to C-terminus: DNA-directed RNA polymerase subunit alpha (327 aa).

The segment at 1-233 (MVREKVKVST…NLFIPFLHVE (233 aa)) is alpha N-terminal domain (alpha-NTD). Residues 266 to 327 (EQGFQYIFID…KKILDILEKK (62 aa)) are alpha C-terminal domain (alpha-CTD).

It belongs to the RNA polymerase alpha chain family. In terms of assembly, in plastids the minimal PEP RNA polymerase catalytic core is composed of four subunits: alpha, beta, beta', and beta''. When a (nuclear-encoded) sigma factor is associated with the core the holoenzyme is formed, which can initiate transcription.

Its subcellular location is the plastid. It localises to the chloroplast. It catalyses the reaction RNA(n) + a ribonucleoside 5'-triphosphate = RNA(n+1) + diphosphate. DNA-dependent RNA polymerase catalyzes the transcription of DNA into RNA using the four ribonucleoside triphosphates as substrates. The protein is DNA-directed RNA polymerase subunit alpha of Barbarea verna (Land cress).